Here is a 76-residue protein sequence, read N- to C-terminus: Small ribosomal subunit protein bS18 (76 aa).

Belongs to the bacterial ribosomal protein bS18 family. In terms of assembly, part of the 30S ribosomal subunit. Forms a tight heterodimer with protein bS6.

Binds as a heterodimer with protein bS6 to the central domain of the 16S rRNA, where it helps stabilize the platform of the 30S subunit. The protein is Small ribosomal subunit protein bS18 of Pseudomonas entomophila (strain L48).